Reading from the N-terminus, the 551-residue chain is MRRVSLPNQLNETRRRSPTRGERIFGGYNTSDVYAMAFDEMFDAQGIVRGPYKGIYAELAPSDASELKARADALGRAFIDQGITFSLSGQERPFPLDLVPRVISAPEWTRLERGITQRVKALECYLDDIYGDQEILRDGVIPRRLVTSCEHFHRQAVGIVPPNGVRIHVAGIDLIRDHRGDFRVLEDNLRSPSGVSYVMENRRTMARVFPNLFATHRVRAVDDYASHLLRALRNSAATNEADPTVVVLTPGVYNSAYFEHSLLARQMGVELVEGRDLFCRDNQVYMRTTEGERQVDVIYRRIDDAFLDPLQFRADSVLGVAGLVNAARAGNVVLSSAIGNGVGDDKLVYTYVPTMIEYYLHEKPLLANVETLRCWLDDEREEVLDRIRELVLKPVEGSGGYGIVFGPEASQAELAAVSQKIRDDPRSWIAQPMMELSTVPTRIEGTLAPRYVDLRPFAVNDGNEVWVLPGGLTRVALVEGSRVVNSSQGGGSKDTWVLAPRASAAARELGAAQIVRSLPQPLCDPTVDASGYEPHDQQPQQQQQQQQQAFH.

Residues Met1–Asn11 are compositionally biased toward polar residues. Disordered regions lie at residues Met1–Glu22 and Cys523–His551. Residues Glu12–Glu22 are compositionally biased toward basic and acidic residues. Positions Gln537 to His551 are enriched in low complexity.

It to Synechocystis PCC 6803 sll0335 and to M.tuberculosis Rv2567.

This is an uncharacterized protein from Mycobacterium bovis (strain ATCC BAA-935 / AF2122/97).